Here is a 253-residue protein sequence, read N- to C-terminus: Phycocyanobilin:ferredoxin oxidoreductase (253 aa).

This sequence belongs to the HY2 family.

The catalysed reaction is (2R,3Z)-phycocyanobilin + 4 oxidized [2Fe-2S]-[ferredoxin] = biliverdin IXalpha + 4 reduced [2Fe-2S]-[ferredoxin] + 4 H(+). In terms of biological role, catalyzes the four-electron reduction of biliverdin IX-alpha (2-electron reduction at both the A and D rings); the reaction proceeds via an isolatable 2-electron intermediate, 181,182-dihydrobiliverdin. The polypeptide is Phycocyanobilin:ferredoxin oxidoreductase (pcyA) (Gloeobacter violaceus (strain ATCC 29082 / PCC 7421)).